Reading from the N-terminus, the 117-residue chain is Hemerythrin subunit beta (117 aa).

Residues His24, His53, Glu57, His72, His76, His105, and Asp110 each contribute to the Fe cation site.

It belongs to the hemerythrin family. As to quaternary structure, octamer composed of two types of chains: alpha and beta.

Functionally, hemerythrin is a respiratory protein in blood cells of certain marine worms. The oxygen-binding site in each chain contains two iron atoms. This Lingula reevii (Inarticulated brachiopod) protein is Hemerythrin subunit beta.